Here is a 234-residue protein sequence, read N- to C-terminus: MQNFKVDFLTKNCKQIYQRKKHVILGISPFTSKYNESYIRKIIQWANSNFDDFSILLAGEESKNLLECLGYSSSKANQKVRKEIKRQIRFCEDEIIKCNKTITNRIHRFSDFKNNIYYIDIYKTIVDQFNTDSNFKNSCLKMSLQALQSKGKNVNTSIEITDETLEYAAQYVLAELPFFLNANPIINTQETLMAYHAPWELGTNIINDQFNLKMNEKQGYIILTEKGDNYVKSV.

The Nucleophile role is filled by S28. Substrate contacts are provided by residues 171–175, Y195, and 200–201; these read YVLAE and EL.

The protein belongs to the CDPS family.

It catalyses the reaction 2 L-leucyl-tRNA(Leu) = cyclo(L-leucyl-L-leucyl) + 2 tRNA(Leu) + 2 H(+). Functionally, it uses activated amino acids in the form of aminoacyl-tRNAs (aa-tRNAs) as substrates to catalyze the ATP-independent formation of cyclodipeptides which are intermediates in diketopiperazine (DKP) biosynthetic pathways. Catalyzes the formation of cyclo(L-Leu-L-Leu) (cLL) from L-leucyl-tRNA(Leu). Can incorporate various nonpolar residues, such as L-phenylalanine, L-leucine and L-methionine, into cyclodipeptides. This chain is Cyclo(L-leucyl-L-leucyl) synthase, found in Staphylococcus haemolyticus (strain JCSC1435).